The following is a 700-amino-acid chain: Putative ankyrin repeat protein FPV018 (700 aa).

ANK repeat units lie at residues 29–59 (DRLL…VINM), 63–92 (NRLL…VING), 126–155 (RIRR…DLKM), 204–233 (MRRI…LADT), 236–265 (ALED…DINS), 270–299 (NSHT…DPDI), 301–332 (DIYS…RIRC), 395–424 (CNMY…DVNV), 428–457 (YGKT…NVNE), 461–490 (YGIT…DVNQ), and 494–523 (DKNT…DMCF).

This is Putative ankyrin repeat protein FPV018 from Fowlpox virus (strain NVSL) (FPV).